The sequence spans 93 residues: DNA-binding protein Fis (93 aa).

Positions 74–93 (QTRAALMMGINRGTLRKKLK) form a DNA-binding region, H-T-H motif.

This sequence belongs to the transcriptional regulatory Fis family. In terms of assembly, homodimer.

In terms of biological role, activates ribosomal RNA transcription. Plays a direct role in upstream activation of rRNA promoters. The chain is DNA-binding protein Fis from Klebsiella pneumoniae.